A 227-amino-acid polypeptide reads, in one-letter code: 2,3-bisphosphoglycerate-dependent phosphoglycerate mutase (227 aa).

Residues 7 to 14 (RHGFSEWN), 20 to 21 (TG), arginine 59, 86 to 89 (ERHY), lysine 97, 113 to 114 (RR), and 182 to 183 (GN) each bind substrate. Histidine 8 serves as the catalytic Tele-phosphohistidine intermediate. The active-site Proton donor/acceptor is glutamate 86.

This sequence belongs to the phosphoglycerate mutase family. BPG-dependent PGAM subfamily. Homodimer.

The catalysed reaction is (2R)-2-phosphoglycerate = (2R)-3-phosphoglycerate. It functions in the pathway carbohydrate degradation; glycolysis; pyruvate from D-glyceraldehyde 3-phosphate: step 3/5. Catalyzes the interconversion of 2-phosphoglycerate and 3-phosphoglycerate. The sequence is that of 2,3-bisphosphoglycerate-dependent phosphoglycerate mutase from Actinobacillus pleuropneumoniae serotype 5b (strain L20).